The sequence spans 154 residues: Transcriptional repressor NrdR (154 aa).

A zinc finger spans residues 3 to 34 (CPFCGAHDTKVIDSRLVAEGDQVRRRRECLAC). The ATP-cone domain occupies 49 to 139 (PRLIKQDGSR…VYRRFQDLNE (91 aa)).

Belongs to the NrdR family. Zn(2+) serves as cofactor.

In terms of biological role, negatively regulates transcription of bacterial ribonucleotide reductase nrd genes and operons by binding to NrdR-boxes. The sequence is that of Transcriptional repressor NrdR from Pseudomonas aeruginosa (strain LESB58).